Here is a 185-residue protein sequence, read N- to C-terminus: Lysozyme g (185 aa).

A Pyrrolidone carboxylic acid modification is found at glutamine 1. Cystine bridges form between cysteine 4/cysteine 60 and cysteine 18/cysteine 29. Active-site residues include glutamate 73 and aspartate 86.

Belongs to the glycosyl hydrolase 23 family.

The protein localises to the secreted. It carries out the reaction Hydrolysis of (1-&gt;4)-beta-linkages between N-acetylmuramic acid and N-acetyl-D-glucosamine residues in a peptidoglycan and between N-acetyl-D-glucosamine residues in chitodextrins.. The protein is Lysozyme g of Casuarius casuarius (Southern cassowary).